Reading from the N-terminus, the 92-residue chain is Small ribosomal subunit protein bS20 (92 aa).

Residues 1 to 23 (MANSPSAKKRAKQAEKRRSHNAS) are disordered. Residues 7 to 20 (AKKRAKQAEKRRSH) show a composition bias toward basic residues.

Belongs to the bacterial ribosomal protein bS20 family.

Binds directly to 16S ribosomal RNA. This is Small ribosomal subunit protein bS20 from Pseudomonas fluorescens (strain ATCC BAA-477 / NRRL B-23932 / Pf-5).